Here is a 1025-residue protein sequence, read N- to C-terminus: Retinoblastoma-related protein (1025 aa).

Positions 1 to 20 are disordered; sequence MEDHPPKPSIPTADASLSNH. Positions 422–623 are domain A; that stretch reads TPVTTAMTTA…EKGSSMYNSL (202 aa). Residues 422–875 are pocket; sequence TPVTTAMTTA…NEIFIPAVKP (454 aa). A spacer region spans residues 624–744; it reads TVARPALSAE…PGAGGETCAE (121 aa). The domain B stretch occupies residues 745 to 875; that stretch reads TAINVFFSKI…NEIFIPAVKP (131 aa).

The protein belongs to the retinoblastoma protein (RB) family.

The protein resides in the nucleus. Regulator of biological processes that recruits a histone deacetylase to control gene transcription. May play a role in the entry into mitosis, negatively regulating the cell proliferation. Formation of stable complexes with geminiviridae replication-associated proteins may create a cellular environment which favors viral DNA replication. In Camellia sinensis (Tea plant), this protein is Retinoblastoma-related protein (pRB).